The chain runs to 90 residues: Mitochondrial import inner membrane translocase subunit Tim10-B (90 aa).

The short motif at 29-54 (CHKKCVPPHYKEAELSKGESVCLDRC) is the Twin CX3C motif element. 2 disulfides stabilise this stretch: Cys29–Cys54 and Cys33–Cys50.

This sequence belongs to the small Tim family. Heterohexamer; composed of 3 copies of TIMM9 and 3 copies of TIMM10/TIM10A, named soluble 70 kDa complex. The complex forms a 6-bladed alpha-propeller structure and associates with the TIMM22 component of the TIM22 complex. Interacts with multi-pass transmembrane proteins in transit.

The protein localises to the mitochondrion inner membrane. Its function is as follows. Mitochondrial intermembrane chaperone that participates in the import and insertion of multi-pass transmembrane proteins into the mitochondrial inner membrane. May also be required for the transfer of beta-barrel precursors from the TOM complex to the sorting and assembly machinery (SAM complex) of the outer membrane. Acts as a chaperone-like protein that protects the hydrophobic precursors from aggregation and guide them through the mitochondrial intermembrane space. The polypeptide is Mitochondrial import inner membrane translocase subunit Tim10-B (timm10-b) (Xenopus laevis (African clawed frog)).